Here is a 316-residue protein sequence, read N- to C-terminus: Geminin coiled-coil domain-containing protein 1 (316 aa).

The stretch at 82–117 forms a coiled coil; that stretch reads QISANKQLQDTLLQKEEELSRLHEENNKLKEFLNSA. Polar residues-rich tracts occupy residues 134 to 155 and 207 to 234; these read GQSS…STPG and MSLQ…QAAT. Disordered stretches follow at residues 134–160 and 207–269; these read GQSS…KAKR and MSLQ…DVAP. Thr-153 is modified (phosphothreonine; by cdk2). Residues 235–252 show a composition bias toward low complexity; that stretch reads SCSLSPSQCSSASLPESE. The segment covering 253–262 has biased composition (polar residues); it reads TASPLSSPTY.

Belongs to the GEMC1 family. Interacts with topbp1. Interacts with Cdc45l and the kinase cdk2-cyclin-E (the interaction is direct). Highly phosphorylated by cdk2; stimulates initiation of DNA replication. In terms of tissue distribution, expressed in most tissues. Enriched in proliferating cells from skin and gut.

The protein localises to the nucleus. Its function is as follows. Regulator of DNA replication. Promotes initiation of chromosomal DNA replication by mediating topbp1- and cdk2-dependent recruitment of cdc45l onto replication origins. The sequence is that of Geminin coiled-coil domain-containing protein 1 (gmnc) from Xenopus laevis (African clawed frog).